Consider the following 397-residue polypeptide: MASSMASNDFQLPPRFFTVFVSHFSSEFMVIPVSYYDHIPHRFPKTVILRGPGGCSWKVATEIKDDEVLFSQGWPKFVRDNTLNDGDFLTFAYNGAHIFEVSIFRGYDACKEISEVTELEEEEEDSVISLSSEDTDTGAKSEMKNTVPEGRDKGKSKVEVVEDSDDDEEEDSVYSESSEETETDTDSEFKVAKPTIPKSQKKGKKKEQVVESSDDEEDEEEDSDSDYIETFGQLDIEENSISEEDSSYAPDKEDTATASFVKPKVANKVANLKRKEAAKKRKKVDPMIKNPERYLDDPKNIHFETNVKNRLYELLVHAQLVKDYCLRFGDYVNYIDRFGKLSAKTAKWKDQRVCIKRWMRICKRNKLKKEDRILCELLRKGTFVYAIKLHVIRGKDL.

The segment at residues 14-107 (PRFFTVFVSH…IFEVSIFRGY (94 aa)) is a DNA-binding region (TF-B3). The segment at 118–255 (ELEEEEEDSV…SSYAPDKEDT (138 aa)) is disordered. The segment covering 137-160 (TGAKSEMKNTVPEGRDKGKSKVEV) has biased composition (basic and acidic residues). Composition is skewed to acidic residues over residues 161–186 (VEDSDDDEEEDSVYSESSEETETDTD), 212–227 (SSDDEEDEEEDSDSDY), and 235–246 (DIEENSISEEDS).

It is found in the nucleus. The polypeptide is B3 domain-containing protein At4g34400 (Arabidopsis thaliana (Mouse-ear cress)).